Consider the following 154-residue polypeptide: Fimbrial protein (154 aa).

Positions 1–6 are cleaved as a propeptide — leader sequence; sequence MNAQKG. Phe7 is modified (N-methylphenylalanine). Residues 7–29 traverse the membrane as a helical segment; it reads FTLIELMIVIAIIGILAAIALPA.

It belongs to the N-Me-Phe pilin family. In terms of assembly, the pili are polar flexible filaments of about 5.4 nanometers diameter and 2.5 micrometers average length; they consist of only a single polypeptide chain arranged in a helical configuration of five subunits per turn in the assembled pilus.

Its subcellular location is the fimbrium. It localises to the membrane. The protein is Fimbrial protein (tfpA) of Moraxella nonliquefaciens.